A 297-amino-acid chain; its full sequence is Acetylglutamate kinase (297 aa).

Substrate-binding positions include 73–74 (GG), arginine 95, and asparagine 188.

Belongs to the acetylglutamate kinase family. ArgB subfamily.

Its subcellular location is the cytoplasm. The catalysed reaction is N-acetyl-L-glutamate + ATP = N-acetyl-L-glutamyl 5-phosphate + ADP. Its pathway is amino-acid biosynthesis; L-arginine biosynthesis; N(2)-acetyl-L-ornithine from L-glutamate: step 2/4. Its function is as follows. Catalyzes the ATP-dependent phosphorylation of N-acetyl-L-glutamate. The sequence is that of Acetylglutamate kinase from Nostoc sp. (strain PCC 7120 / SAG 25.82 / UTEX 2576).